The primary structure comprises 81 residues: Sulfur carrier protein TusA (81 aa).

Cysteine 19 serves as the catalytic Cysteine persulfide intermediate.

It belongs to the sulfur carrier protein TusA family.

The protein resides in the cytoplasm. Functionally, sulfur carrier protein which probably makes part of a sulfur-relay system. This is Sulfur carrier protein TusA from Shewanella sp. (strain ANA-3).